Consider the following 443-residue polypeptide: Probable D-serine dehydratase (443 aa).

K118 carries the post-translational modification N6-(pyridoxal phosphate)lysine.

This sequence belongs to the serine/threonine dehydratase family. DsdA subfamily. Requires pyridoxal 5'-phosphate as cofactor.

It catalyses the reaction D-serine = pyruvate + NH4(+). This Colwellia psychrerythraea (strain 34H / ATCC BAA-681) (Vibrio psychroerythus) protein is Probable D-serine dehydratase.